A 445-amino-acid chain; its full sequence is Ribosomal protein uS12 methylthiotransferase RimO (445 aa).

The 111-residue stretch at 10–120 (PKVGFVSLGC…VVNAVHEVVP (111 aa)) folds into the MTTase N-terminal domain. Cysteine 19, cysteine 55, cysteine 84, cysteine 153, cysteine 157, and cysteine 160 together coordinate [4Fe-4S] cluster. In terms of domain architecture, Radical SAM core spans 139 to 378 (LTPRHYAYLK…AHQQEISSAR (240 aa)). The TRAM domain occupies 380–445 (QQRIGKEIEV…DEYDLWAETL (66 aa)).

It belongs to the methylthiotransferase family. RimO subfamily. [4Fe-4S] cluster serves as cofactor.

It is found in the cytoplasm. The enzyme catalyses L-aspartate(89)-[ribosomal protein uS12]-hydrogen + (sulfur carrier)-SH + AH2 + 2 S-adenosyl-L-methionine = 3-methylsulfanyl-L-aspartate(89)-[ribosomal protein uS12]-hydrogen + (sulfur carrier)-H + 5'-deoxyadenosine + L-methionine + A + S-adenosyl-L-homocysteine + 2 H(+). Functionally, catalyzes the methylthiolation of an aspartic acid residue of ribosomal protein uS12. This chain is Ribosomal protein uS12 methylthiotransferase RimO, found in Pseudomonas fluorescens (strain ATCC BAA-477 / NRRL B-23932 / Pf-5).